The following is a 155-amino-acid chain: UPF0225 protein ECA2332 (155 aa).

This sequence belongs to the UPF0225 family.

The protein is UPF0225 protein ECA2332 of Pectobacterium atrosepticum (strain SCRI 1043 / ATCC BAA-672) (Erwinia carotovora subsp. atroseptica).